The chain runs to 122 residues: Small ribosomal subunit protein uS13 (122 aa).

Positions 95 to 122 (GLPVRGQRTHTNARTRKGKAKPIAGKKK) are disordered.

The protein belongs to the universal ribosomal protein uS13 family. In terms of assembly, part of the 30S ribosomal subunit. Forms a loose heterodimer with protein S19. Forms two bridges to the 50S subunit in the 70S ribosome.

Its function is as follows. Located at the top of the head of the 30S subunit, it contacts several helices of the 16S rRNA. In the 70S ribosome it contacts the 23S rRNA (bridge B1a) and protein L5 of the 50S subunit (bridge B1b), connecting the 2 subunits; these bridges are implicated in subunit movement. Contacts the tRNAs in the A and P-sites. The sequence is that of Small ribosomal subunit protein uS13 from Sphingopyxis alaskensis (strain DSM 13593 / LMG 18877 / RB2256) (Sphingomonas alaskensis).